We begin with the raw amino-acid sequence, 2187 residues long: Non-reducing polyketide synthase phnA (2187 aa).

Residues 17-255 (LLFGDLSLAH…KYLDIDSPYH (239 aa)) are N-terminal acylcarrier protein transacylase domain (SAT). Residues 383–819 (HSKIAIVGYS…GGNTAMLIED (437 aa)) form the Ketosynthase family 3 (KS3) domain. Catalysis depends on for beta-ketoacyl synthase activity residues Cys-555, His-690, and His-735. The interval 926–1226 (RVAFAFTGQG…GMVKGTIDSR (301 aa)) is malonyl-CoA:ACP transacylase (MAT) domain. Catalysis depends on Ser-1021, which acts as the For acyl/malonyl transferase activity. The tract at residues 1321 to 1637 (PCAQQIVEEF…PRRALDHLLP (317 aa)) is product template (PT) domain. The segment at 1324 to 1458 (QQIVEEFHDS…LDVVLYPGQQ (135 aa)) is N-terminal hotdog fold. The 310-residue stretch at 1324 to 1633 (QQIVEEFHDS…FQGVPRRALD (310 aa)) folds into the PKS/mFAS DH domain. His-1356 (proton acceptor; for dehydratase activity) is an active-site residue. Residues 1486 to 1633 (TETHLIKRGM…FQGVPRRALD (148 aa)) are C-terminal hotdog fold. Residue Asp-1546 is the Proton donor; for dehydratase activity of the active site. Low complexity predominate over residues 1652–1669 (KAPVAAVAPPRTPTKAAP). Residues 1652 to 1681 (KAPVAAVAPPRTPTKAAPQSRQAAPKQKRS) are disordered. Carrier domains follow at residues 1684 to 1758 (SDVF…SNSD) and 1796 to 1874 (SSES…YNVM). Ser-1718 is modified (O-(pantetheine 4'-phosphoryl)serine). A disordered region spans residues 1754–1796 (LSNSDEDDTPSGDSSTYEDSESQITSPASSVGPETPGGGEFGS). The segment covering 1757-1774 (SDEDDTPSGDSSTYEDSE) has biased composition (acidic residues). Ser-1834 is modified (O-(pantetheine 4'-phosphoryl)serine). Positions 1906 to 2183 (SSLPQATSIL…PEMGEAVAEF (278 aa)) are thioesterase (TE) domain. The For thioesterase activity role is filled by Ser-2009.

The enzyme catalyses 6 malonyl-CoA + acetyl-CoA + 5 H(+) = 3,6,7,9-tetrahydroxy-3-methyl-2,3-dihydro-1H-naphtho[2,1-b]pyran-1-one + 6 CO2 + 7 CoA + H2O. It participates in secondary metabolite biosynthesis. In terms of biological role, non-reducing polyketide synthase; part of the gene cluster that mediates the biosynthesis of phenalenones such as herqueinone, compounds that have been reported to treat tumors, bacterial infections and/or mycoses, and rheumatic diseases. The non-reducing polyketide synthase phnA synthesizes the heptaketide backbone and cyclizes it into the angular, hemiketal-containing naphtho-gamma-pyrone prephenalenone. The product template (PT) domain of phnA catalyzes only the C4-C9 aldol condensation, which is unprecedented among known PT domains. The transformation of prephenalenone to phenalenones requires an FAD-dependent monooxygenase phnB, which catalyzes the C2 aromatic hydroxylation of prephenalenone and ring opening of the gamma-pyrone ring simultaneously. Subsequent intramolecular deprotonation of C3 phenolic oxygen accelerates phenalenone ring closure to yield the tricyclic phenalenone core with a C2 hydroxylation. The prenyltransferase phnF further catalyzes reverse C-prenylation of phenalenone by direct electrophilic substitution at C6, or possibly via first a forward O-prenylation of a neighboring phenol in phenalenone, followed by a Claisen rearrangement. The hydroalkoxylation enzyme phnH catalyzes the 5-exo-trig cyclization via acid catalysis after the spontaneous deprotonation of 7-OH, which leads to the formation of the dihydrobenzofuran atrovenetin. Atrovenetin is further converted to deoxyherqueinone by the O-methyltransferase phnC which can methylate C2-OH to stabilize the northern portion of the phenalenone core. Finally, the oxidoreductase phnG converts deoxyherqueinone to herqueinone via C6 hydroxylation. This is Non-reducing polyketide synthase phnA from Penicillium herquei.